A 362-amino-acid polypeptide reads, in one-letter code: MKHIALIVLYFLSFSVQAERLKDIASVQGVRENQLFGYGLVIGLNGTGDSTAFTNQSFVSMLSRFGVTLPEGVNATSKNVAAVSLTATLPAFSKPGQKIDVTVSSIGNASALRGGTLLLSTLKGADGAVYAIAQGNLVVGGLGANGADGSRTTGNVPTVGRIPNGASVERIVPSSFNTGDTLTFNLNRPDFTTAKQVTDKINNLLGPGVATTLDATSIRVSAPRDSSQRVTYLSILENLDVEVAEERARIVVNSRTGTIIIGQHVKVSPAAITHGSLTVTIKEVPPVVGKDGTITGGQTIVSPREGIEIAPNSGHMFVFDPGASLDDIVRAVNQVGAAPGDVMAILEGLKQAGAINADLVVI.

An N-terminal signal peptide occupies residues 1–18; that stretch reads MKHIALIVLYFLSFSVQA.

Belongs to the FlgI family. In terms of assembly, the basal body constitutes a major portion of the flagellar organelle and consists of four rings (L,P,S, and M) mounted on a central rod.

It is found in the periplasm. Its subcellular location is the bacterial flagellum basal body. Assembles around the rod to form the L-ring and probably protects the motor/basal body from shearing forces during rotation. This is Flagellar P-ring protein from Marinomonas sp. (strain MWYL1).